Consider the following 680-residue polypeptide: MSNTRKILITSALPYANGPIHLGHLVEYIQTDIWARFQKMRGHECYYVCADDAHGTPIMLRAQAEGIDPEDLIARISEEHQTDFAGFNINFDFYHSTNSPENKHFASYIYTQLKEQNHISRKTIKQFYDPEKKMFLPDRFIKGTCPKCKTDDQYGDNCEACGATYSPTDLLNPKSAVSGATPIEKETDHLFFELSHFEDMLKEWTHQGHLQTQIANKLDEWFESGLRAWDISRDAPYFGFEIPGEKDKFFYVWLDAPVGYMASFKALCDKTGLDFDEFWKADSTTELYHFIGKDIIYFHALFWPAMLSGAGFRTPNAIFSHGFLTVDGQKMSKSRGTFIMAKTYLDHLNPEYLRYYFAAKLNSRIDDIDLSLEDFAQRVNSDLVGKVVNIASRCAGFVSKKFDGKLSQAWSDSASTLYQSFIDKSETIANLYEQREYAQAMREIMALADKANEYIDETAPWVLAKQEGKEAELYESVSLGINLFRVLITYLAPVIPTTAEKAQAFLQVDTLNWTDINTPLKDHEITKFKALMTRVEIESIEKMTDASKQDMKKMPPMKPEIKEEASNLDPIADEITFDDFAKVDFRIAKIVNAEQVPEADKLIKLTLDIGVGERQVFAGIKSAYKPEDLVGKLTVMVANLKPRKMRFGLSEGMVLAAGPGGKDLFLLNPDDGAQPGMRVK.

The 'HIGH' region signature appears at 14–24 (PYANGPIHLGH). Residues Cys145, Cys148, Cys158, and Cys161 each coordinate Zn(2+). Positions 330–334 (KMSKS) match the 'KMSKS' region motif. Position 333 (Lys333) interacts with ATP. Residues 579–680 (DFAKVDFRIA…DGAQPGMRVK (102 aa)) form the tRNA-binding domain.

The protein belongs to the class-I aminoacyl-tRNA synthetase family. MetG type 1 subfamily. As to quaternary structure, homodimer. Zn(2+) serves as cofactor.

It localises to the cytoplasm. The enzyme catalyses tRNA(Met) + L-methionine + ATP = L-methionyl-tRNA(Met) + AMP + diphosphate. Its function is as follows. Is required not only for elongation of protein synthesis but also for the initiation of all mRNA translation through initiator tRNA(fMet) aminoacylation. This chain is Methionine--tRNA ligase, found in Hydrogenovibrio crunogenus (strain DSM 25203 / XCL-2) (Thiomicrospira crunogena).